The following is a 558-amino-acid chain: Trehalase 1 (558 aa).

Belongs to the glycosyl hydrolase 15 family.

The enzyme catalyses alpha,alpha-trehalose + H2O = alpha-D-glucose + beta-D-glucose. It functions in the pathway glycan degradation; trehalose degradation; D-glucose from alpha,alpha-trehalose: step 1/1. Its function is as follows. Catalyzes the hydrolysis of alpha,alpha-trehalose into two molecules of D-glucose. The chain is Trehalase 1 (treH1) from Sulfolobus acidocaldarius (strain ATCC 33909 / DSM 639 / JCM 8929 / NBRC 15157 / NCIMB 11770).